The chain runs to 698 residues: Effector protein AvrPphDPgy (698 aa).

Polar residues predominate over residues 1 to 15; sequence MNPLRSIQHNITTPP. 2 disordered regions span residues 1–36 and 171–200; these read MNPL…HPKR and VDSS…DSDS. Over residues 172-181 the composition is skewed to low complexity; sequence DSSSPLLSSP.

The protein localises to the secreted. In terms of biological role, effector protein involved in non-host recognition. The protein is Effector protein AvrPphDPgy (avrPphDPgy) of Pseudomonas savastanoi pv. glycinea (Pseudomonas syringae pv. glycinea).